Consider the following 264-residue polypeptide: Small ribosomal subunit protein uS3 (264 aa).

In terms of domain architecture, KH type-2 spans 39–107 (VREYLKKKLK…PVHVNIEEIR (69 aa)). The segment at 214–264 (PVETAAPREEERRPRRAPRGDRPDGARNGRPGGGRGRAPRKADAAPAPEGE) is disordered. The segment covering 219–240 (APREEERRPRRAPRGDRPDGAR) has biased composition (basic and acidic residues).

The protein belongs to the universal ribosomal protein uS3 family. As to quaternary structure, part of the 30S ribosomal subunit. Forms a tight complex with proteins S10 and S14.

Functionally, binds the lower part of the 30S subunit head. Binds mRNA in the 70S ribosome, positioning it for translation. The chain is Small ribosomal subunit protein uS3 from Bordetella avium (strain 197N).